Here is a 476-residue protein sequence, read N- to C-terminus: Inosine-5'-monophosphate dehydrogenase (476 aa).

CBS domains are found at residues 93 to 151 (IIRD…VKDI) and 152 to 211 (MTKD…TRDE). NAD(+) contacts are provided by residues Asp242 and 292 to 294 (GIG). Residues Gly294 and Gly296 each contribute to the K(+) site. Ser297 is a binding site for IMP. Cys299 serves as a coordination point for K(+). Cys299 serves as the catalytic Thioimidate intermediate. Residues 334–336 (DGG), 357–358 (GY), and 381–385 (YRGMG) contribute to the IMP site. Arg398 functions as the Proton acceptor in the catalytic mechanism. Position 408 (Glu408) interacts with IMP. Glu462 contributes to the K(+) binding site.

It belongs to the IMPDH/GMPR family. In terms of assembly, homotetramer. The cofactor is K(+).

The catalysed reaction is IMP + NAD(+) + H2O = XMP + NADH + H(+). It participates in purine metabolism; XMP biosynthesis via de novo pathway; XMP from IMP: step 1/1. Its activity is regulated as follows. Mycophenolic acid (MPA) is a non-competitive inhibitor that prevents formation of the closed enzyme conformation by binding to the same site as the amobile flap. In contrast, mizoribine monophosphate (MZP) is a competitive inhibitor that induces the closed conformation. MPA is a potent inhibitor of mammalian IMPDHs but a poor inhibitor of the bacterial enzymes. MZP is a more potent inhibitor of bacterial IMPDH. In terms of biological role, catalyzes the conversion of inosine 5'-phosphate (IMP) to xanthosine 5'-phosphate (XMP), the first committed and rate-limiting step in the de novo synthesis of guanine nucleotides, and therefore plays an important role in the regulation of cell growth. The sequence is that of Inosine-5'-monophosphate dehydrogenase from Korarchaeum cryptofilum (strain OPF8).